The sequence spans 487 residues: Multiple inositol polyphosphate phosphatase 1 (487 aa).

The signal sequence occupies residues 1 to 30 (MLRAPGCLLRTSVAPAAALAAALLSSLARC). Residue H89 is part of the active site. N242 and N481 each carry an N-linked (GlcNAc...) asparagine glycan. The Prevents secretion from ER signature appears at 484-487 (SDEL).

Belongs to the histidine acid phosphatase family. MINPP1 subfamily. N-glycosylated. Widely expressed with highest levels in kidney, liver, cerebellum and placenta.

It is found in the endoplasmic reticulum lumen. The protein resides in the secreted. Its subcellular location is the cell membrane. It catalyses the reaction 1D-myo-inositol hexakisphosphate + H2O = 1D-myo-inositol 1,2,4,5,6-pentakisphosphate + phosphate. It carries out the reaction 1D-myo-inositol 1,2,4,5,6-pentakisphosphate + H2O = 1D-myo-inositol 1,2,5,6-tetrakisphosphate + phosphate. The catalysed reaction is 1D-myo-inositol 1,2,5,6-tetrakisphosphate + H2O = 1D-myo-inositol 1,2,6-trisphosphate + phosphate. The enzyme catalyses 1D-myo-inositol 1,2,6-trisphosphate + H2O = 1D-myo-inositol 1,2-bisphosphate + phosphate. It catalyses the reaction 1D-myo-inositol 1,2-bisphosphate + H2O = 1D-myo-inositol 2-phosphate + phosphate. It carries out the reaction 1D-myo-inositol hexakisphosphate + H2O = 1D-myo-inositol 1,2,3,5,6-pentakisphosphate + phosphate. The catalysed reaction is 1D-myo-inositol 1,2,3,5,6-pentakisphosphate + H2O = 1D-myo-inositol 1,2,3,6-tetrakisphosphate + phosphate. The enzyme catalyses 1D-myo-inositol 1,2,3,6-tetrakisphosphate + H2O = 1D-myo-inositol 1,2,3-trisphosphate + phosphate. It catalyses the reaction 1D-myo-inositol 1,2,3-trisphosphate + H2O = 1D-myo-inositol 2,3-bisphosphate + phosphate. It carries out the reaction 1D-myo-inositol 2,3-bisphosphate + H2O = 1D-myo-inositol 2-phosphate + phosphate. The catalysed reaction is 1D-myo-inositol 1,3,4,5,6-pentakisphosphate + H2O = 1D-myo-inositol 1,4,5,6-tetrakisphosphate + phosphate. The enzyme catalyses 1D-myo-inositol 1,4,5,6-tetrakisphosphate + H2O = 1D-myo-inositol 1,4,5-trisphosphate + phosphate. It catalyses the reaction (2R)-2,3-bisphosphoglycerate + H2O = (2R)-2-phosphoglycerate + phosphate. In terms of biological role, multiple inositol polyphosphate phosphatase that hydrolyzes 1D-myo-inositol 1,3,4,5,6-pentakisphosphate (InsP5[2OH]) and 1D-myo-inositol hexakisphosphate (InsP6) to a range of less phosphorylated inositol phosphates. This regulates the availability of these various small molecule second messengers and metal chelators which control many aspects of cell physiology. Has a weak in vitro activity towards 1D-myo-inositol 1,4,5-trisphosphate which is unlikely to be physiologically relevant. By regulating intracellular inositol polyphosphates pools, which act as metal chelators, it may control the availability of intracellular calcium and iron, which are important for proper neuronal development and homeostasis. May have a dual substrate specificity, and function as a 2,3-bisphosphoglycerate 3-phosphatase hydrolyzing 2,3-bisphosphoglycerate to 2-phosphoglycerate. 2,3-bisphosphoglycerate (BPG) is formed as part of the Rapoport-Luebering glycolytic bypass and is a regulator of systemic oxygen homeostasis as the major allosteric effector of hemoglobin. The sequence is that of Multiple inositol polyphosphate phosphatase 1 from Homo sapiens (Human).